Consider the following 594-residue polypeptide: Type I restriction enzyme EcoEI specificity subunit (594 aa).

The protein belongs to the type-I restriction system S methylase family. As to quaternary structure, the type I restriction/modification system is composed of three polypeptides R, M and S; the restriction enzyme has stoichiometry R(2)M(2)S(1) while the methyltransferase is M(2)S(1).

In terms of biological role, the specificity (S) subunit of a type I restriction enzyme; this subunit dictates DNA sequence specificity. The M and S subunits together form a methyltransferase (MTase) that methylates two adenine residues of the sequence 5'-GAGN(7)ATGC-3'. In the presence of the R subunit the complex can also act as an endonuclease, binding to the same target sequence but cutting the DNA some distance from this site. Whether the DNA is cut or modified depends on the methylation state of the target sequence. When the target site is unmodified, the DNA is cut. When the target site is hemimethylated, the complex acts as a maintenance MTase modifying the DNA so that both strands become methylated. After locating a non-methylated recognition site, the enzyme complex serves as a molecular motor that translocates DNA in an ATP-dependent manner until a collision occurs that triggers cleavage. The chain is Type I restriction enzyme EcoEI specificity subunit from Escherichia coli.